We begin with the raw amino-acid sequence, 346 residues long: O-methyltransferase atr3 (346 aa).

2 disordered regions span residues methionine 1–methionine 22 and glycine 52–alanine 88. S-adenosyl-L-methionine is bound by residues aspartate 190–leucine 191 and aspartate 217–isoleucine 218.

The protein belongs to the class I-like SAM-binding methyltransferase superfamily. In terms of assembly, homodimer.

The catalysed reaction is 4-O-demethylbarbatate + S-adenosyl-L-methionine = proatranorin I + S-adenosyl-L-homocysteine. Its pathway is secondary metabolite biosynthesis; terpenoid biosynthesis. In terms of biological role, O-methyltransferase; part of the gene cluster that mediates the biosynthesis of atranorin, a depside of polyketide origin that accumulates in the cortical or medullary layers of lichen thalli. Atr3 methylates the carboxyl group of 4-O-demethylbarbatic acid to yield proatranorin I. Atr3 is also able to methylate the atr2 product proatranorin III to produce the final compound atranorin. The first step in the pathway is performed by the non-reducing polyketide synthase atr1 that produces 4-O-demethylbarbatic acid composed of two 3-methylorsellinic acid (3MOA) moieties. The pathway continues with the actions of the cytochrome P450 monooygenase atr2 that catalizes the oxidation of c-9 and the O-methyltransferase atr3 that performs the methylation of the carboxyl group to yield atranorin, via the proatranorin II and III intermediates if atr2 acts first, or the proatranorin I intermediate if atr3 acts first. This chain is O-methyltransferase atr3, found in Stereocaulon alpinum (Alpine snow lichen).